Reading from the N-terminus, the 215-residue chain is Probable GTP-binding protein EngB (215 aa).

The 175-residue stretch at 30–204 folds into the EngB-type G domain; that stretch reads EGLEVAFAGR…QMVLAQWLGL (175 aa). GTP contacts are provided by residues 38–45, 64–68, 82–85, 149–152, and 182–185; these read GRSNAGKS, GRTQL, DLPG, TKAD, and LFSA. The Mg(2+) site is built by Ser45 and Thr66.

The protein belongs to the TRAFAC class TrmE-Era-EngA-EngB-Septin-like GTPase superfamily. EngB GTPase family. Mg(2+) is required as a cofactor.

Its function is as follows. Necessary for normal cell division and for the maintenance of normal septation. The chain is Probable GTP-binding protein EngB from Pseudomonas paraeruginosa (strain DSM 24068 / PA7) (Pseudomonas aeruginosa (strain PA7)).